A 691-amino-acid chain; its full sequence is MARTQAEPPASQPDARAAWLRDQLERANYAYYVLDQPDLPDAEYDRLFRELQQLETDHPELVTPDSPTQRVGGEAAGGFTPVVHDAPMLSLNNGFADEDIVAFDKRVADALAKATDLAGSVTDPVEYACELKFDGLAISLRYENGVFVQAATRGDGTTGEDVTENVRTIRSIPLKLKGKHVPAVLDVRGEVLMFKRDFARLNERQRAAEQREFANPRNAAAGSLRQLDSKITAQRPLSFFAYGIGVLDGMPMPDTHTALLDWYEAFGLPVNRERAVVHGAEGLLDFFRKVGEKRESLPYDIDGVVYKVNRRDEQERLGFVSRAPRFALAHKFPAQEALTKLVAIDVQVGRTGAITPVARLEPVFVGGATVTNATLHNEDEVRRKDIRIGDTVIVRRAGDVIPEVVGALLDRRPADAAEFVMPTECPVCGSKIERLPDEAIARCTGGLFCPAQRKQALWHFAQRRALDIDGLGEKIIDQLVELNLVRTPADLFNLGFATLAELDRFAEKSAQNLLDSLEKAKHTTLARFIYGLGIRHVGESTAKDLAKHFGSLTPIMDASIEELLEVNDVGPIVAESIHQFFAEEHNRTVIEQLRAPGKVTWPEGPPAPKAPQGVLAGKTVVLTGTLPNLTRDAAKEMLEAAGAKVAGSVSKKTDYVVAGAEAGSKLAKAEELGIPVLDEDGLHQLLEGNTP.

Residues 41-45 (DAEYD), 90-91 (SL), and glutamate 130 each bind NAD(+). Catalysis depends on lysine 132, which acts as the N6-AMP-lysine intermediate. NAD(+) is bound by residues arginine 153, glutamate 190, lysine 307, and lysine 331. Residues cysteine 425, cysteine 428, cysteine 443, and cysteine 449 each contribute to the Zn(2+) site. Residues 610 to 691 (APQGVLAGKT…LHQLLEGNTP (82 aa)) enclose the BRCT domain.

Belongs to the NAD-dependent DNA ligase family. LigA subfamily. Mg(2+) serves as cofactor. Requires Mn(2+) as cofactor.

It catalyses the reaction NAD(+) + (deoxyribonucleotide)n-3'-hydroxyl + 5'-phospho-(deoxyribonucleotide)m = (deoxyribonucleotide)n+m + AMP + beta-nicotinamide D-nucleotide.. Functionally, DNA ligase that catalyzes the formation of phosphodiester linkages between 5'-phosphoryl and 3'-hydroxyl groups in double-stranded DNA using NAD as a coenzyme and as the energy source for the reaction. It is essential for DNA replication and repair of damaged DNA. The chain is DNA ligase from Burkholderia cenocepacia (strain ATCC BAA-245 / DSM 16553 / LMG 16656 / NCTC 13227 / J2315 / CF5610) (Burkholderia cepacia (strain J2315)).